The primary structure comprises 372 residues: Queuine tRNA-ribosyltransferase (372 aa).

Asp89 serves as the catalytic Proton acceptor. Residues 89 to 93 (DSGGF), Asp161, and Gly232 each bind substrate. An RNA binding region spans residues 262 to 268 (GIGDLPS). Catalysis depends on Asp281, which acts as the Nucleophile. An RNA binding; important for wobble base 34 recognition region spans residues 286–290 (TKAAR). Residues Cys319, Cys321, Cys324, and His351 each contribute to the Zn(2+) site.

The protein belongs to the queuine tRNA-ribosyltransferase family. Homodimer. Within each dimer, one monomer is responsible for RNA recognition and catalysis, while the other monomer binds to the replacement base PreQ1. The cofactor is Zn(2+).

The catalysed reaction is 7-aminomethyl-7-carbaguanine + guanosine(34) in tRNA = 7-aminomethyl-7-carbaguanosine(34) in tRNA + guanine. It functions in the pathway tRNA modification; tRNA-queuosine biosynthesis. Its function is as follows. Catalyzes the base-exchange of a guanine (G) residue with the queuine precursor 7-aminomethyl-7-deazaguanine (PreQ1) at position 34 (anticodon wobble position) in tRNAs with GU(N) anticodons (tRNA-Asp, -Asn, -His and -Tyr). Catalysis occurs through a double-displacement mechanism. The nucleophile active site attacks the C1' of nucleotide 34 to detach the guanine base from the RNA, forming a covalent enzyme-RNA intermediate. The proton acceptor active site deprotonates the incoming PreQ1, allowing a nucleophilic attack on the C1' of the ribose to form the product. After dissociation, two additional enzymatic reactions on the tRNA convert PreQ1 to queuine (Q), resulting in the hypermodified nucleoside queuosine (7-(((4,5-cis-dihydroxy-2-cyclopenten-1-yl)amino)methyl)-7-deazaguanosine). This Chlamydia muridarum (strain MoPn / Nigg) protein is Queuine tRNA-ribosyltransferase.